The chain runs to 107 residues: Proteinase inhibitor I-B (107 aa).

An N-terminal signal peptide occupies residues 1-22; the sequence is MVKFAHVVAFLLLASLFQPLTA. A propeptide spanning residues 23–39 is cleaved from the precursor; sequence RDLEINVLQLDVSQSGC.

Belongs to the protease inhibitor I13 (potato type I serine protease inhibitor) family.

Its subcellular location is the secreted. In Nicotiana tabacum (Common tobacco), this protein is Proteinase inhibitor I-B (TIMPA).